We begin with the raw amino-acid sequence, 228 residues long: Ribosomal RNA small subunit methyltransferase G (228 aa).

S-adenosyl-L-methionine is bound by residues G70, 121 to 122, and R138; that span reads AE.

Belongs to the methyltransferase superfamily. RNA methyltransferase RsmG family.

The protein localises to the cytoplasm. Its function is as follows. Specifically methylates the N7 position of a guanine in 16S rRNA. This chain is Ribosomal RNA small subunit methyltransferase G, found in Thermotoga petrophila (strain ATCC BAA-488 / DSM 13995 / JCM 10881 / RKU-1).